The following is a 1496-amino-acid chain: DENN domain-containing protein 4B (1496 aa).

In terms of domain architecture, MABP spans 44–203 (AEPITDVAVI…AVYLCYKVGL (160 aa)). One can recognise a uDENN domain in the interval 195-369 (VYLCYKVGLA…NVPFPSPQRP (175 aa)). The cDENN domain occupies 390 to 526 (PLPLSGASFL…PYKVLLATLT (137 aa)). A dDENN domain is found at 528–644 (LYQQLDQTYT…ECSFGSARHA (117 aa)). A disordered region spans residues 720 to 744 (QPGALPVPGPSRSAPSSPAPRRTKQ). Over residues 729 to 739 (PSRSAPSSPAP) the composition is skewed to low complexity. PPR repeat units lie at residues 775-811 (WFLC…VVLP) and 812-846 (DEVC…GIVP). Disordered regions lie at residues 891 to 970 (LRER…ARGA), 995 to 1055 (VPWH…TPRR), 1067 to 1119 (PSRH…GSEW), and 1205 to 1227 (SRPS…PVPG). A compositionally biased stretch (low complexity) spans 896-912 (QQQQQQQQQQQQQQQEQ). Composition is skewed to polar residues over residues 913-924 (VSAHQEAGSSQA) and 935-944 (RPLQRQTTWA). Ser-953 is modified (phosphoserine). Pro residues predominate over residues 1075-1090 (RIPPPELPPDLPPPAR). Ser-1092 bears the Phosphoserine mark. Positions 1105-1119 (GSTASESSASLGSEW) are enriched in low complexity.

It is found in the golgi apparatus. Functionally, guanine nucleotide exchange factor (GEF) which may activate RAB10. Promotes the exchange of GDP to GTP, converting inactive GDP-bound Rab proteins into their active GTP-bound form. In Homo sapiens (Human), this protein is DENN domain-containing protein 4B (DENND4B).